A 137-amino-acid chain; its full sequence is Ribosome-binding factor A (137 aa).

The disordered stretch occupies residues 110-137; sequence RIQQEKEGATDDRDQNDSGEDATPHSND. The segment covering 112–125 has biased composition (basic and acidic residues); that stretch reads QQEKEGATDDRDQN.

This sequence belongs to the RbfA family. As to quaternary structure, monomer. Binds 30S ribosomal subunits, but not 50S ribosomal subunits or 70S ribosomes.

It localises to the cytoplasm. Its function is as follows. One of several proteins that assist in the late maturation steps of the functional core of the 30S ribosomal subunit. Associates with free 30S ribosomal subunits (but not with 30S subunits that are part of 70S ribosomes or polysomes). Required for efficient processing of 16S rRNA. May interact with the 5'-terminal helix region of 16S rRNA. This chain is Ribosome-binding factor A, found in Rhodopirellula baltica (strain DSM 10527 / NCIMB 13988 / SH1).